Here is a 506-residue protein sequence, read N- to C-terminus: Bifunctional purine biosynthesis protein PurH (506 aa).

Positions 1–146 (MARLALLSVS…KNFAHLTVLC (146 aa)) constitute an MGS-like domain.

Belongs to the PurH family.

It catalyses the reaction (6R)-10-formyltetrahydrofolate + 5-amino-1-(5-phospho-beta-D-ribosyl)imidazole-4-carboxamide = 5-formamido-1-(5-phospho-D-ribosyl)imidazole-4-carboxamide + (6S)-5,6,7,8-tetrahydrofolate. It carries out the reaction IMP + H2O = 5-formamido-1-(5-phospho-D-ribosyl)imidazole-4-carboxamide. The protein operates within purine metabolism; IMP biosynthesis via de novo pathway; 5-formamido-1-(5-phospho-D-ribosyl)imidazole-4-carboxamide from 5-amino-1-(5-phospho-D-ribosyl)imidazole-4-carboxamide (10-formyl THF route): step 1/1. It participates in purine metabolism; IMP biosynthesis via de novo pathway; IMP from 5-formamido-1-(5-phospho-D-ribosyl)imidazole-4-carboxamide: step 1/1. In Trichormus variabilis (strain ATCC 29413 / PCC 7937) (Anabaena variabilis), this protein is Bifunctional purine biosynthesis protein PurH.